Consider the following 343-residue polypeptide: Dihydroorotate dehydrogenase (quinone) (343 aa).

Residues 61–65 (AGLDK) and Thr85 each bind FMN. Lys65 contacts substrate. 110–114 (NRMGF) contributes to the substrate binding site. FMN is bound by residues Asn138 and Asn171. Position 171 (Asn171) interacts with substrate. Ser174 functions as the Nucleophile in the catalytic mechanism. Asn176 is a binding site for substrate. FMN is bound by residues Lys216 and Thr244. 245–246 (NT) contributes to the substrate binding site. FMN contacts are provided by residues Gly267, Gly296, and 317-318 (YS).

The protein belongs to the dihydroorotate dehydrogenase family. Type 2 subfamily. As to quaternary structure, monomer. It depends on FMN as a cofactor.

It localises to the cell membrane. It catalyses the reaction (S)-dihydroorotate + a quinone = orotate + a quinol. It functions in the pathway pyrimidine metabolism; UMP biosynthesis via de novo pathway; orotate from (S)-dihydroorotate (quinone route): step 1/1. Its function is as follows. Catalyzes the conversion of dihydroorotate to orotate with quinone as electron acceptor. The polypeptide is Dihydroorotate dehydrogenase (quinone) (Pseudomonas savastanoi pv. phaseolicola (strain 1448A / Race 6) (Pseudomonas syringae pv. phaseolicola (strain 1448A / Race 6))).